The sequence spans 987 residues: AP3-complex subunit beta-A (987 aa).

The disordered stretch occupies residues 586 to 662 (QDQLSDLDKQ…ISETSVSADQ (77 aa)). Residues 603-613 (DGSEESSETGD) are compositionally biased toward acidic residues. Positions 614 to 631 (ENGSSDYDSESSNGSDFS) are enriched in low complexity.

The protein belongs to the adaptor complexes large subunit family. Adaptor protein complex 3 (AP-3) is a heterotetramer composed of two large adaptins (delta-type subunit and beta-type subunit), a medium adaptin (mu-type subunit) and a small adaptin (sigma-type subunit).

It is found in the cytoplasm. The protein resides in the golgi apparatus. It localises to the cytoplasmic vesicle membrane. Part of the AP-3 complex, an adaptor-related complex which seems to be clathrin-associated. The complex is associated with the Golgi region as well as more peripheral structures. It facilitates the budding of vesicles from the Golgi membrane and may be directly involved in trafficking to the vacuole. It also function in maintaining the identity of lytic vacuoles and in regulating the transition between storage and lytic vacuoles. In Arabidopsis thaliana (Mouse-ear cress), this protein is AP3-complex subunit beta-A (AP3BA).